Consider the following 146-residue polypeptide: Anti-sigma F factor (146 aa).

This sequence belongs to the anti-sigma-factor family.

The enzyme catalyses L-seryl-[protein] + ATP = O-phospho-L-seryl-[protein] + ADP + H(+). The catalysed reaction is L-threonyl-[protein] + ATP = O-phospho-L-threonyl-[protein] + ADP + H(+). Its function is as follows. Binds to sigma F and blocks its ability to form an RNA polymerase holoenzyme (E-sigma F). Phosphorylates SpoIIAA on a serine residue. This phosphorylation may enable SpoIIAA to act as an anti-anti-sigma factor that counteracts SpoIIAB and thus releases sigma F from inhibition. In Geobacillus stearothermophilus (Bacillus stearothermophilus), this protein is Anti-sigma F factor.